Consider the following 246-residue polypeptide: 5-oxoprolinase subunit A (246 aa).

The protein belongs to the LamB/PxpA family. In terms of assembly, forms a complex composed of PxpA, PxpB and PxpC.

It carries out the reaction 5-oxo-L-proline + ATP + 2 H2O = L-glutamate + ADP + phosphate + H(+). In terms of biological role, catalyzes the cleavage of 5-oxoproline to form L-glutamate coupled to the hydrolysis of ATP to ADP and inorganic phosphate. This is 5-oxoprolinase subunit A from Cupriavidus metallidurans (strain ATCC 43123 / DSM 2839 / NBRC 102507 / CH34) (Ralstonia metallidurans).